We begin with the raw amino-acid sequence, 195 residues long: ATP-dependent Clp protease proteolytic subunit (195 aa).

Residue Ser97 is the Nucleophile of the active site. The active site involves His122.

Belongs to the peptidase S14 family. Fourteen ClpP subunits assemble into 2 heptameric rings which stack back to back to give a disk-like structure with a central cavity, resembling the structure of eukaryotic proteasomes.

The protein resides in the cytoplasm. The enzyme catalyses Hydrolysis of proteins to small peptides in the presence of ATP and magnesium. alpha-casein is the usual test substrate. In the absence of ATP, only oligopeptides shorter than five residues are hydrolyzed (such as succinyl-Leu-Tyr-|-NHMec, and Leu-Tyr-Leu-|-Tyr-Trp, in which cleavage of the -Tyr-|-Leu- and -Tyr-|-Trp bonds also occurs).. Cleaves peptides in various proteins in a process that requires ATP hydrolysis. Has a chymotrypsin-like activity. Plays a major role in the degradation of misfolded proteins. This chain is ATP-dependent Clp protease proteolytic subunit, found in Lactobacillus acidophilus (strain ATCC 700396 / NCK56 / N2 / NCFM).